The chain runs to 50 residues: Conotoxin Bu13 (50 aa).

A signal peptide is located at residue A1. The propeptide occupies 2 to 24 (EDSRGTQLHRALRKTTKLSLSIR). 3 cysteine pairs are disulfide-bonded: C25–C40, C32–C44, and C39–C49.

It belongs to the conotoxin O1 superfamily. In terms of tissue distribution, expressed by the venom duct.

It is found in the secreted. This is Conotoxin Bu13 from Conus bullatus (Bubble cone).